A 691-amino-acid chain; its full sequence is POU domain, class 6, transcription factor 2 (691 aa).

Disordered regions lie at residues 1–61 (MIAG…RGNT), 188–297 (QQQQ…LQLV), and 435–461 (GQAA…SALS). Basic and acidic residues predominate over residues 17–28 (MNAELRGEDKAA). Composition is skewed to low complexity over residues 188–197 (QQQQQQQQQQ) and 206–216 (QHPQPASQAPP). Residues 217–237 (QSQPTPPHQPPPASQQLPAPP) show a composition bias toward pro residues. A compositionally biased stretch (low complexity) spans 238–272 (AQLEQATQPQQHQPHSHPQNQTQNQPSPTQQSSSP). Positions 437-447 (AATSHSPVRQA) are enriched in polar residues. The segment covering 448–458 (SSSSSSSSSSS) has biased composition (low complexity). The POU-specific domain occupies 476-586 (VDGVNLEEIR…VLERWMAEAE (111 aa)). The homeobox DNA-binding region spans 607-666 (KRKRRTSFTPQALEILNAHFEKNTHPSGQEMTEIAEKLNYDREVVRVWFCNKRQALKNTI). Positions 670-691 (KQHEPTSAAPLEPLADSPEENC) are disordered.

The protein belongs to the POU transcription factor family. Class-6 subfamily. In terms of tissue distribution, expressed in kidney, heart, muscle, spleen and ovary, but not in lung.

It localises to the nucleus. Its function is as follows. Probable transcription factor likely to be involved in early steps in the differentiation of amacrine and ganglion cells. Recognizes and binds to the DNA sequence 5'-ATGCAAAT-3'. This chain is POU domain, class 6, transcription factor 2 (Pou6f2), found in Mus musculus (Mouse).